Here is a 676-residue protein sequence, read N- to C-terminus: Envelope glycoprotein (676 aa).

Residues M1–S32 form the signal peptide. Topologically, residues I33–Q650 are extracellular. The N-linked (GlcNAc...) asparagine; by host glycan is linked to N40. 5 disulfide bridges follow: C53–C609, C108–C135, C121–C147, C511–C556, and C601–C608. The receptor-binding stretch occupies residues R54–E201. N204, N228, N238, N257, N268, N296, N317, N333, N346, N386, and N413 each carry an N-linked (GlcNAc...) asparagine; by host glycan. The tract at residues E305–T485 is mucin-like region. Polar residues predominate over residues R314–T335. Positions R314–E337 are disordered. Disordered regions lie at residues T373 to P392 and T402 to L479. The segment covering A414 to A427 has biased composition (low complexity). N436, N454, and N462 each carry an N-linked (GlcNAc...) asparagine; by host glycan. A compositionally biased stretch (polar residues) spans A447–T464. Residues G524–A539 are fusion peptide. Positions L554–Q595 form a coiled coil. N563 carries N-linked (GlcNAc...) asparagine; by host glycosylation. Residues W615–T634 are a coiled coil. A glycan (N-linked (GlcNAc...) asparagine; by host) is linked at N618. The chain crosses the membrane as a helical span at residues W651 to I671. 2 S-palmitoyl cysteine; by host lipidation sites follow: C670 and C672. Residues C672–F676 lie on the Cytoplasmic side of the membrane.

It belongs to the filoviruses glycoprotein family. In terms of assembly, homotrimer; each monomer consists of a GP1 and a GP2 subunit linked by disulfide bonds. The resulting peplomers (GP1,2) protrude from the virus surface as spikes. Interacts with host integrin alpha-V/ITGAV. Interacts with host CLEC10A. Binds also to host CD209 and CLEC4M/DC-SIGN(R). Interacts with host FOLR1. Interacts with BST2; this interaction inhibits the antiviral effect of BST2 and this allows viral release from infected cells. Interacts with host FCN1; this interaction enhances viral entry. Interacts with host TLR4; this interaction induces cell death in T-lymphocytes or proinflammatory cytokines and SOCS1 production in monocytes. Interacts with host entry receptor NPC1. As to quaternary structure, GP1 and GP2delta are part of GP1,2delta soluble complexes released by ectodomain shedding. In terms of processing, the signal peptide region modulates GP's high mannose glycosylation, thereby determining the efficiency of the interactions with DC-SIGN(R). N-glycosylated. Post-translationally, O-glycosylated in the mucin-like region. In terms of processing, palmitoylation of GP2 is not required for its function. Specific enzymatic cleavages in vivo yield mature proteins. The precursor is processed into GP1 and GP2 by host cell furin in the trans Golgi, and maybe by other host proteases, to yield the mature GP1 and GP2 proteins. The cleavage site corresponds to the furin optimal cleavage sequence [KR]-X-[KR]-R. This cleavage does not seem to be required for function. After the internalization of the virus into cell endosomes, GP1 C-terminus is removed by the endosomal proteases cathepsin B, cathepsin L, or both, leaving a 19-kDa N-terminal fragment which is further digested by cathepsin B. Proteolytic processing of GP1,2 by host ADAM17 can remove the transmembrane anchor of GP2 and leads to shedding of complexes consisting in GP1 and truncated GP2 (GP1,2delta).

The protein localises to the virion membrane. It localises to the host cell membrane. It is found in the secreted. Its function is as follows. Trimeric GP1,2 complexes form the virion surface spikes and mediate the viral entry processes, with GP1 acting as the receptor-binding subunit and GP2 as the membrane fusion subunit. At later times of infection, down-regulates the expression of various host cell surface molecules that are essential for immune surveillance and cell adhesion. Down-modulates several integrins including ITGA1, ITGA2, ITGA3, ITGA4, ITGA5, ITGA6, ITGAV and ITGB1. This decrease in cell adhesion molecules may lead to cell detachment, contributing to the disruption of blood vessel integrity and hemorrhages developed during infection (cytotoxicity). Interacts with host TLR4 and thereby stimulates the differentiation and activation of monocytes leading to bystander death of T-lymphocytes. Down-regulates as well the function of host natural killer cells. Counteracts the antiviral effect of host BST2/tetherin that restricts release of progeny virions from infected cells. However, cooperates with VP40 and host BST2 to activate canonical NF-kappa-B pathway in a manner dependent on neddylation. Functions as a decoy for anti-GP1,2 antibodies thereby contributing to viral immune evasion. Interacts and activates host macrophages and dendritic cells inducing up-regulation of cytokine transcription. This effect is mediated throught activation of host TLR4. Functionally, responsible for binding to the receptor(s) on target cells. Interacts with CD209/DC-SIGN and CLEC4M/DC-SIGNR which act as cofactors for virus entry into dendritic cells (DCs) and endothelial cells. Binding to the macrophage specific lectin CLEC10A also seems to enhance virus infectivity. Interaction with FOLR1/folate receptor alpha may be a cofactor for virus entry in some cell types, although results are contradictory. Members of the Tyro3 receptor tyrosine kinase family also seem to be cell entry factors in filovirus infection. Once attached, the virions are internalized through clathrin-dependent endocytosis and/or macropinocytosis. After internalization of the virus into the endosomes of the host cell, proteolysis of GP1 by two cysteine proteases, CTSB/cathepsin B and CTSL/cathepsin L removes the glycan cap and allows GP1 binding to the host entry receptor NPC1. NPC1-binding, Ca(2+) and acidic pH induce a conformational change of GP2, which unmasks its fusion peptide and permit membranes fusion. In terms of biological role, acts as a class I viral fusion protein. Under the current model, the protein has at least 3 conformational states: pre-fusion native state, pre-hairpin intermediate state, and post-fusion hairpin state. During viral and target cell membrane fusion, the coiled coil regions (heptad repeats) assume a trimer-of-hairpins structure, positioning the fusion peptide in close proximity to the C-terminal region of the ectodomain. The formation of this structure appears to drive apposition and subsequent fusion of viral and target cell membranes. Responsible for penetration of the virus into the cell cytoplasm by mediating the fusion of the membrane of the endocytosed virus particle with the endosomal membrane. Low pH in endosomes induces an irreversible conformational change in GP2, releasing the fusion hydrophobic peptide. In Epomops franqueti (Franquet's epauletted fruit bat), this protein is Envelope glycoprotein (GP).